Reading from the N-terminus, the 142-residue chain is Phenylalanine ammonia-lyase (142 aa).

Positions 66, 94, and 97 each coordinate (E)-cinnamate.

Belongs to the PAL/histidase family. In terms of assembly, homotetramer. In terms of processing, contains an active site 4-methylidene-imidazol-5-one (MIO), which is formed autocatalytically by cyclization and dehydration of residues Ala-Ser-Gly.

The protein resides in the cytoplasm. The catalysed reaction is L-phenylalanine = (E)-cinnamate + NH4(+). It participates in phenylpropanoid metabolism; trans-cinnamate biosynthesis; trans-cinnamate from L-phenylalanine: step 1/1. Functionally, catalyzes the non-oxidative deamination of L-phenylalanine to form trans-cinnamic acid and a free ammonium ion. Facilitates the commitment step in phenylpropanoid pathways that produce secondary metabolites such as lignins, coumarins and flavonoids. The chain is Phenylalanine ammonia-lyase (palA) from Agaricus bisporus (White button mushroom).